A 122-amino-acid chain; its full sequence is Small ribosomal subunit protein uS13 (122 aa).

The tract at residues 99 to 122 is disordered; sequence RGQRTHTNARTRKGPAKAIAGKKK.

The protein belongs to the universal ribosomal protein uS13 family. In terms of assembly, part of the 30S ribosomal subunit. Forms a loose heterodimer with protein S19. Forms two bridges to the 50S subunit in the 70S ribosome.

Its function is as follows. Located at the top of the head of the 30S subunit, it contacts several helices of the 16S rRNA. In the 70S ribosome it contacts the 23S rRNA (bridge B1a) and protein L5 of the 50S subunit (bridge B1b), connecting the 2 subunits; these bridges are implicated in subunit movement. Contacts the tRNAs in the A and P-sites. In Rhizobium meliloti (strain 1021) (Ensifer meliloti), this protein is Small ribosomal subunit protein uS13.